Reading from the N-terminus, the 60-residue chain is MARYRHSRSRSRSRYRRRRRRRSRYRSRRRRXRRRRRSRRGRRRRGYSRRRYSRRRRRRY.

Positions 1–60 (MARYRHSRSRSRSRYRRRRRRRSRYRSRRRRXRRRRRSRRGRRRRGYSRRRYSRRRRRRY) are disordered.

The protein belongs to the protamine P1 family. As to expression, testis.

Its subcellular location is the nucleus. It localises to the chromosome. Its function is as follows. Protamines substitute for histones in the chromatin of sperm during the haploid phase of spermatogenesis. They compact sperm DNA into a highly condensed, stable and inactive complex. This chain is Sperm protamine P1 (PRM1), found in Petrogale concinna (Nabarlek).